The sequence spans 132 residues: Large ribosomal subunit protein bL17 (132 aa).

This sequence belongs to the bacterial ribosomal protein bL17 family. In terms of assembly, part of the 50S ribosomal subunit. Contacts protein L32.

The polypeptide is Large ribosomal subunit protein bL17 (Polaromonas sp. (strain JS666 / ATCC BAA-500)).